A 160-amino-acid chain; its full sequence is Protein max (160 aa).

Residues 1-13 are compositionally biased toward acidic residues; it reads MSDNDDIEVESDE. The segment at 1–40 is disordered; that stretch reads MSDNDDIEVESDEEQPRFQSAADKRAHHNALERKRRDHIK. Residue Ser-2 is modified to N-acetylserine. Phosphoserine occurs at positions 2 and 11. Residues 23-74 enclose the bHLH domain; it reads DKRAHHNALERKRRDHIKDSFHSLRDSVPSLQGEKASRAQILDKATEYIQYM. Over residues 29-40 the composition is skewed to basic and acidic residues; sequence NALERKRRDHIK. Lys-66 carries the post-translational modification N6-acetyllysine. Residues 81 to 102 are leucine-zipper; it reads HQQDIDDLKRQNALLEQQVRAL. The interval 105–160 is disordered; the sequence is ARSSAQLQTNYPSSDNSLYTNAKGGTISAFDGGSDSSSESEPEEPQNRKKLRMEAS. A Phosphoserine modification is found at Ser-107. The span at 107–124 shows a compositional bias: polar residues; it reads SSAQLQTNYPSSDNSLYT. Residues Lys-153 and Lys-154 each carry the N6-acetyllysine modification.

The protein belongs to the MAX family. In terms of assembly, efficient DNA binding requires dimerization with another bHLH protein. Binds DNA as a heterodimer with MYC or MAD. Part of the E2F6.com-1 complex in G0 phase composed of E2F6, MGA, MAX, TFDP1, CBX3, BAT8, EUHMTASE1, RING1, RNF2, MBLR, L3MBTL2 and YAF2. Component of some MLL1/MLL complex, at least composed of the core components KMT2A/MLL1, ASH2L, HCFC1/HCF1, WDR5 and RBBP5, as well as the facultative components BACC1, CHD8, E2F6, HSP70, INO80C, KANSL1, LAS1L, MAX, MCRS1, MGA, MYST1/MOF, PELP1, PHF20, PRP31, RING2, RUVB1/TIP49A, RUVB2/TIP49B, SENP3, TAF1, TAF4, TAF6, TAF7, TAF9 and TEX10. Interacts with SPAG9. The heterodimer MYC:MAX interacts with ABI1; the interaction may enhance MYC:MAX transcriptional activity. In terms of processing, phosphorylated.

It localises to the nucleus. Its subcellular location is the cell projection. It is found in the dendrite. In terms of biological role, transcription regulator. Forms a sequence-specific DNA-binding protein complex with MYC or MAD which recognizes the core sequence 5'-CAC[GA]TG-3'. The MYC:MAX complex is a transcriptional activator, whereas the MAD:MAX complex is a repressor. May repress transcription via the recruitment of a chromatin remodeling complex containing H3 'Lys-9' histone methyltransferase activity. Represses MYC transcriptional activity from E-box elements. The protein is Protein max of Rattus norvegicus (Rat).